We begin with the raw amino-acid sequence, 206 residues long: Repetitive proline-rich cell wall protein 1 (206 aa).

A signal peptide spans 1 to 22 (MASSNFLVLLLFALFAIPQGLA). 33 repeat units span residues 32-36 (PPVYK), 37-41 (PPVEK), 42-46 (PPVYK), 47-51 (PPVEK), 52-56 (PPVYK), 57-61 (PPVEK), 62-66 (PPVYK), 67-71 (PPVYK), 72-76 (PPVYK), 77-81 (PPVVK), 82-86 (PPVYK), 87-91 (PPVYK), 92-96 (PPVYK), 97-101 (PPVYK), 102-106 (PPVEK), 107-111 (PPVYK), 112-116 (PPVYK), 117-121 (PPVVK), 122-126 (PPVYK), 127-131 (PPVYK), 132-136 (PPVEK), 137-141 (PPVYK), 142-146 (PPVVK), 147-151 (PPVYK), 152-156 (PPVYK), 157-161 (PPVVK), 162-166 (PPVYK), 167-171 (PPVYK), 172-176 (PPVYK), 177-181 (PPVEK), 182-186 (PPVYK), 187-191 (PPVYK), and 192-196 (PPVEK). A 34 X 5 AA approximate tandem repeats of P-P-V-[EVY]-K region spans residues 32 to 201 (PPVYKPPVEK…PPVEKPPVYG (170 aa)). Residues 51–84 (KPPVYKPPVEKPPVYKPPVYKPPVYKPPVVKPPV) are disordered. A disordered region spans residues 132 to 206 (PPVEKPPVYK…PPVYGPPHHP (75 aa)). One copy of the 34; approximate repeat lies at 197-201 (PPVYG).

Belongs to the plant proline-rich protein superfamily. ENOD12 family. In terms of tissue distribution, expressed in hypocotyls, roots and mature root nodules.

It localises to the secreted. The protein resides in the cell wall. Functionally, this is a developmentally regulated putative cell wall protein. This Medicago truncatula (Barrel medic) protein is Repetitive proline-rich cell wall protein 1 (PRP1).